We begin with the raw amino-acid sequence, 419 residues long: UDP-N-acetylglucosamine 1-carboxyvinyltransferase (419 aa).

22-23 (KN) is a binding site for phosphoenolpyruvate. R95 provides a ligand contact to UDP-N-acetyl-alpha-D-glucosamine. Residue C119 is the Proton donor of the active site. The residue at position 119 (C119) is a 2-(S-cysteinyl)pyruvic acid O-phosphothioketal. UDP-N-acetyl-alpha-D-glucosamine is bound by residues 164 to 167 (KVSV), D308, and I330.

This sequence belongs to the EPSP synthase family. MurA subfamily.

It is found in the cytoplasm. It catalyses the reaction phosphoenolpyruvate + UDP-N-acetyl-alpha-D-glucosamine = UDP-N-acetyl-3-O-(1-carboxyvinyl)-alpha-D-glucosamine + phosphate. It functions in the pathway cell wall biogenesis; peptidoglycan biosynthesis. Its function is as follows. Cell wall formation. Adds enolpyruvyl to UDP-N-acetylglucosamine. This Rickettsia rickettsii (strain Iowa) protein is UDP-N-acetylglucosamine 1-carboxyvinyltransferase.